Here is a 235-residue protein sequence, read N- to C-terminus: Large ribosomal subunit protein uL1 (235 aa).

Belongs to the universal ribosomal protein uL1 family. In terms of assembly, part of the 50S ribosomal subunit.

Functionally, binds directly to 23S rRNA. The L1 stalk is quite mobile in the ribosome, and is involved in E site tRNA release. Its function is as follows. Protein L1 is also a translational repressor protein, it controls the translation of the L11 operon by binding to its mRNA. This chain is Large ribosomal subunit protein uL1, found in Prochlorococcus marinus (strain NATL1A).